A 417-amino-acid polypeptide reads, in one-letter code: Serine--tRNA ligase (417 aa).

Thr232 to Glu234 provides a ligand contact to L-serine. ATP is bound at residue Arg263–Glu265. Glu286 is an L-serine binding site. An ATP-binding site is contributed by Glu350–Ser353. Ser385 lines the L-serine pocket.

This sequence belongs to the class-II aminoacyl-tRNA synthetase family. Type-1 seryl-tRNA synthetase subfamily. As to quaternary structure, homodimer. The tRNA molecule binds across the dimer.

The protein localises to the cytoplasm. It carries out the reaction tRNA(Ser) + L-serine + ATP = L-seryl-tRNA(Ser) + AMP + diphosphate + H(+). It catalyses the reaction tRNA(Sec) + L-serine + ATP = L-seryl-tRNA(Sec) + AMP + diphosphate + H(+). Its pathway is aminoacyl-tRNA biosynthesis; selenocysteinyl-tRNA(Sec) biosynthesis; L-seryl-tRNA(Sec) from L-serine and tRNA(Sec): step 1/1. Catalyzes the attachment of serine to tRNA(Ser). Is also able to aminoacylate tRNA(Sec) with serine, to form the misacylated tRNA L-seryl-tRNA(Sec), which will be further converted into selenocysteinyl-tRNA(Sec). The polypeptide is Serine--tRNA ligase (Campylobacter hominis (strain ATCC BAA-381 / DSM 21671 / CCUG 45161 / LMG 19568 / NCTC 13146 / CH001A)).